The chain runs to 311 residues: Malate dehydrogenase (311 aa).

Residues 7-13 (GAAGGIG) and Asp-34 each bind NAD(+). Substrate-binding residues include Arg-81 and Arg-87. Residues Asn-94 and 117–119 (ITN) each bind NAD(+). Substrate is bound by residues Asn-119 and Arg-153. The active-site Proton acceptor is His-177. An NAD(+)-binding site is contributed by Met-227.

It belongs to the LDH/MDH superfamily. MDH type 1 family. As to quaternary structure, homodimer.

The enzyme catalyses (S)-malate + NAD(+) = oxaloacetate + NADH + H(+). Catalyzes the reversible oxidation of malate to oxaloacetate. This Shewanella baltica (strain OS155 / ATCC BAA-1091) protein is Malate dehydrogenase.